Reading from the N-terminus, the 179-residue chain is Adenine phosphoribosyltransferase (179 aa).

Belongs to the purine/pyrimidine phosphoribosyltransferase family. Homodimer.

It localises to the cytoplasm. The enzyme catalyses AMP + diphosphate = 5-phospho-alpha-D-ribose 1-diphosphate + adenine. The protein operates within purine metabolism; AMP biosynthesis via salvage pathway; AMP from adenine: step 1/1. Functionally, catalyzes a salvage reaction resulting in the formation of AMP, that is energically less costly than de novo synthesis. The sequence is that of Adenine phosphoribosyltransferase from Actinobacillus pleuropneumoniae serotype 5b (strain L20).